Reading from the N-terminus, the 180-residue chain is Large ribosomal subunit protein uL6 (180 aa).

It belongs to the universal ribosomal protein uL6 family. As to quaternary structure, part of the 50S ribosomal subunit.

In terms of biological role, this protein binds to the 23S rRNA, and is important in its secondary structure. It is located near the subunit interface in the base of the L7/L12 stalk, and near the tRNA binding site of the peptidyltransferase center. This is Large ribosomal subunit protein uL6 from Thermus aquaticus.